Reading from the N-terminus, the 80-residue chain is Clavanin-C (80 aa).

The first 19 residues, 1-19 (MKTTILILLILGLGINAKS), serve as a signal peptide directing secretion. Residues 20-29 (LEERKSEEEK) constitute a propeptide that is removed on maturation. F52 carries the phenylalanine amide modification. The propeptide occupies 54 to 80 (DDQQDNGKFYGHYAEDNGKHWYDTGDQ).

Hemocytes and pharyngeal tissues.

Its subcellular location is the secreted. In terms of biological role, has antimicrobial activity against E.coli, L.monocytogenes and C.albicans. This is Clavanin-C from Styela clava (Sea squirt).